The following is a 166-amino-acid chain: Disulfide bond reductase DsbH (166 aa).

The signal sequence occupies residues 1 to 22 (MKFWLQGCAFVGCLLLTLPCCA). Positions 32-166 (LQQTRPIAAA…SKVKSALKLR (135 aa)) constitute a Thioredoxin domain. Cysteine 72 and cysteine 75 are disulfide-bonded. 73 to 74 (MW) contributes to the substrate binding site.

As to quaternary structure, monomer.

Its subcellular location is the periplasm. Its function is as follows. Catalyzes the reduction of disulfide bonds. May function in reducing intermolecular disulfides between proteins and small molecules in the periplasm, or keeping a specific subset of periplasmic proteins reduced, or maintaining the periplasm of Chlamydia in a generally reducing state. Seems to be unable to oxidize thiols into disulfides and does not display disulfide bond isomerase activity. In Chlamydia pneumoniae (Chlamydophila pneumoniae), this protein is Disulfide bond reductase DsbH (dsbH).